The primary structure comprises 248 residues: Probable transcriptional regulatory protein PSPPH_3775 (248 aa).

It belongs to the TACO1 family.

Its subcellular location is the cytoplasm. This chain is Probable transcriptional regulatory protein PSPPH_3775, found in Pseudomonas savastanoi pv. phaseolicola (strain 1448A / Race 6) (Pseudomonas syringae pv. phaseolicola (strain 1448A / Race 6)).